The primary structure comprises 148 residues: Ubiquitin-conjugating enzyme E2 4 (148 aa).

The disordered stretch occupies residues 1–22; it reads MSSSKRIAKELSDLERDPPTSC. One can recognise a UBC core domain in the interval 2–148; sequence SSSKRIAKEL…AREWTKKYAV (147 aa). A compositionally biased stretch (basic and acidic residues) spans 7-18; it reads IAKELSDLERDP. S12 carries the post-translational modification Phosphoserine. Residue C86 is the Glycyl thioester intermediate of the active site. K91 participates in a covalent cross-link: Glycyl lysine isopeptide (Lys-Gly) (interchain with G-Cter in ubiquitin).

This sequence belongs to the ubiquitin-conjugating enzyme family. As to quaternary structure, interacts with TUL1. Post-translationally, the N-terminus is blocked.

It carries out the reaction S-ubiquitinyl-[E1 ubiquitin-activating enzyme]-L-cysteine + [E2 ubiquitin-conjugating enzyme]-L-cysteine = [E1 ubiquitin-activating enzyme]-L-cysteine + S-ubiquitinyl-[E2 ubiquitin-conjugating enzyme]-L-cysteine.. It functions in the pathway protein modification; protein ubiquitination. In terms of biological role, E2 ubiquitin-conjugating enzyme that catalyzes the covalent attachment of ubiquitin to other proteins. Mediates the selective degradation of short-lived and abnormal proteins. Mediates ubiquitination of PEX5. The polypeptide is Ubiquitin-conjugating enzyme E2 4 (Saccharomyces cerevisiae (strain ATCC 204508 / S288c) (Baker's yeast)).